We begin with the raw amino-acid sequence, 273 residues long: uncharacterized protein (273 aa).

This is an uncharacterized protein from Acanthamoeba polyphaga (Amoeba).